Reading from the N-terminus, the 198-residue chain is Ribonuclease HII (198 aa).

One can recognise an RNase H type-2 domain in the interval N11 to V198. Positions 17, 18, and 109 each coordinate a divalent metal cation.

Belongs to the RNase HII family. Mn(2+) is required as a cofactor. Requires Mg(2+) as cofactor.

The protein resides in the cytoplasm. The enzyme catalyses Endonucleolytic cleavage to 5'-phosphomonoester.. Its function is as follows. Endonuclease that specifically degrades the RNA of RNA-DNA hybrids. This chain is Ribonuclease HII, found in Yersinia pseudotuberculosis serotype O:3 (strain YPIII).